Reading from the N-terminus, the 28-residue chain is Gamma-conotoxin-like de7a (28 aa).

Disulfide bonds link Cys2/Cys18, Cys9/Cys22, and Cys17/Cys27. Residue Pro4 is modified to 4-hydroxyproline. Glu13 and Glu16 each carry 4-carboxyglutamate. Residue Ser28 is modified to Serine amide.

The protein belongs to the conotoxin O1 superfamily. As to expression, expressed by the venom duct.

It is found in the secreted. In terms of biological role, gamma-conotoxins may act on voltage-gated non-specific cation pacemaker channels (HCN). In Conasprella delessertii (Sozon's cone), this protein is Gamma-conotoxin-like de7a.